The following is a 1106-amino-acid chain: Exportin-T (1106 aa).

Residues 336–357 are disordered; it reads TPLESRTRTGPSAQNGQSDTSD. Over residues 343-357 the composition is skewed to polar residues; the sequence is RTGPSAQNGQSDTSD.

The protein belongs to the exportin family.

Its subcellular location is the nucleus. The protein resides in the cytoplasm. Functionally, tRNA nucleus export receptor which facilitates tRNA translocation across the nuclear pore complex. Involved in pre-tRNA splicing, probably by affecting the interaction of pre-tRNA with splicing endonuclease. The chain is Exportin-T (LOS1) from Mycosarcoma maydis (Corn smut fungus).